The primary structure comprises 293 residues: Elongation factor Ts (293 aa).

The interval 80-83 (TDFV) is involved in Mg(2+) ion dislocation from EF-Tu.

This sequence belongs to the EF-Ts family.

Its subcellular location is the cytoplasm. Its function is as follows. Associates with the EF-Tu.GDP complex and induces the exchange of GDP to GTP. It remains bound to the aminoacyl-tRNA.EF-Tu.GTP complex up to the GTP hydrolysis stage on the ribosome. The sequence is that of Elongation factor Ts from Burkholderia lata (strain ATCC 17760 / DSM 23089 / LMG 22485 / NCIMB 9086 / R18194 / 383).